Reading from the N-terminus, the 187-residue chain is Ribosome-recycling factor (187 aa).

This sequence belongs to the RRF family.

It localises to the cytoplasm. In terms of biological role, responsible for the release of ribosomes from messenger RNA at the termination of protein biosynthesis. May increase the efficiency of translation by recycling ribosomes from one round of translation to another. The protein is Ribosome-recycling factor of Bradyrhizobium sp. (strain ORS 278).